A 180-amino-acid chain; its full sequence is Large ribosomal subunit protein uL10 (180 aa).

The protein belongs to the universal ribosomal protein uL10 family. As to quaternary structure, part of the ribosomal stalk of the 50S ribosomal subunit. The N-terminus interacts with L11 and the large rRNA to form the base of the stalk. The C-terminus forms an elongated spine to which L12 dimers bind in a sequential fashion forming a multimeric L10(L12)X complex.

Its function is as follows. Forms part of the ribosomal stalk, playing a central role in the interaction of the ribosome with GTP-bound translation factors. This chain is Large ribosomal subunit protein uL10, found in Thermosipho melanesiensis (strain DSM 12029 / CIP 104789 / BI429).